We begin with the raw amino-acid sequence, 1343 residues long: DNA-directed RNA polymerase subunit beta (1343 aa).

This sequence belongs to the RNA polymerase beta chain family. As to quaternary structure, the RNAP catalytic core consists of 2 alpha, 1 beta, 1 beta' and 1 omega subunit. When a sigma factor is associated with the core the holoenzyme is formed, which can initiate transcription.

The catalysed reaction is RNA(n) + a ribonucleoside 5'-triphosphate = RNA(n+1) + diphosphate. Its function is as follows. DNA-dependent RNA polymerase catalyzes the transcription of DNA into RNA using the four ribonucleoside triphosphates as substrates. The sequence is that of DNA-directed RNA polymerase subunit beta from Shewanella denitrificans (strain OS217 / ATCC BAA-1090 / DSM 15013).